The chain runs to 280 residues: Eukaryotic translation initiation factor 3 subunit F-1 (280 aa).

The MPN domain occupies 8-138; the sequence is VRVHPVVLFQ…LRAYVCIQLG (131 aa).

This sequence belongs to the eIF-3 subunit F family. Component of the eukaryotic translation initiation factor 3 (eIF-3) complex. The eIF-3 complex interacts with pix.

It is found in the cytoplasm. Functionally, component of the eukaryotic translation initiation factor 3 (eIF-3) complex, which is involved in protein synthesis of a specialized repertoire of mRNAs and, together with other initiation factors, stimulates binding of mRNA and methionyl-tRNAi to the 40S ribosome. The eIF-3 complex specifically targets and initiates translation of a subset of mRNAs involved in cell proliferation. The sequence is that of Eukaryotic translation initiation factor 3 subunit F-1 from Drosophila ananassae (Fruit fly).